Consider the following 374-residue polypeptide: Glutamate 5-kinase (374 aa).

K13 contacts ATP. Positions 54, 141, and 153 each coordinate substrate. 173 to 174 (SD) is a binding site for ATP. The PUA domain maps to 278–355 (KGTVHLDSGA…NEIESVLGYP (78 aa)).

Belongs to the glutamate 5-kinase family.

The protein resides in the cytoplasm. It carries out the reaction L-glutamate + ATP = L-glutamyl 5-phosphate + ADP. It functions in the pathway amino-acid biosynthesis; L-proline biosynthesis; L-glutamate 5-semialdehyde from L-glutamate: step 1/2. Its function is as follows. Catalyzes the transfer of a phosphate group to glutamate to form L-glutamate 5-phosphate. This Roseobacter denitrificans (strain ATCC 33942 / OCh 114) (Erythrobacter sp. (strain OCh 114)) protein is Glutamate 5-kinase.